The chain runs to 142 residues: Large ribosomal subunit protein uL13 (142 aa).

Belongs to the universal ribosomal protein uL13 family. Part of the 50S ribosomal subunit.

Its function is as follows. This protein is one of the early assembly proteins of the 50S ribosomal subunit, although it is not seen to bind rRNA by itself. It is important during the early stages of 50S assembly. This chain is Large ribosomal subunit protein uL13, found in Citrifermentans bemidjiense (strain ATCC BAA-1014 / DSM 16622 / JCM 12645 / Bem) (Geobacter bemidjiensis).